A 643-amino-acid polypeptide reads, in one-letter code: DNA-directed RNA polymerase subunit beta' (643 aa).

4 residues coordinate Zn(2+): C83, C85, C98, and C101. Residues D480, D482, and D484 each coordinate Mg(2+).

This sequence belongs to the RNA polymerase beta' chain family. RpoC1 subfamily. In terms of assembly, in plastids the minimal PEP RNA polymerase catalytic core is composed of four subunits: alpha, beta, beta', and beta''. When a (nuclear-encoded) sigma factor is associated with the core the holoenzyme is formed, which can initiate transcription. Requires Mg(2+) as cofactor. It depends on Zn(2+) as a cofactor.

The protein localises to the plastid. Its subcellular location is the organellar chromatophore. It catalyses the reaction RNA(n) + a ribonucleoside 5'-triphosphate = RNA(n+1) + diphosphate. Functionally, DNA-dependent RNA polymerase catalyzes the transcription of DNA into RNA using the four ribonucleoside triphosphates as substrates. This is DNA-directed RNA polymerase subunit beta' from Paulinella chromatophora.